Consider the following 378-residue polypeptide: Chaperone protein DnaJ (378 aa).

Residues 5-69 form the J domain; it reads DYYEVLGVSK…NKRANYDQFG (65 aa). The CR-type zinc-finger motif lies at 135 to 217; sequence GSEKEISIRK…CHGKGTENKN (83 aa). Positions 148, 151, 165, 168, 191, 194, 205, and 208 each coordinate Zn(2+). CXXCXGXG motif repeat units follow at residues 148-155, 165-172, 191-198, and 205-212; these read CHTCDGEG, CHYCNGSG, CPVCSGSG, and CPTCHGKG.

It belongs to the DnaJ family. Homodimer. Requires Zn(2+) as cofactor.

Its subcellular location is the cytoplasm. In terms of biological role, participates actively in the response to hyperosmotic and heat shock by preventing the aggregation of stress-denatured proteins and by disaggregating proteins, also in an autonomous, DnaK-independent fashion. Unfolded proteins bind initially to DnaJ; upon interaction with the DnaJ-bound protein, DnaK hydrolyzes its bound ATP, resulting in the formation of a stable complex. GrpE releases ADP from DnaK; ATP binding to DnaK triggers the release of the substrate protein, thus completing the reaction cycle. Several rounds of ATP-dependent interactions between DnaJ, DnaK and GrpE are required for fully efficient folding. Also involved, together with DnaK and GrpE, in the DNA replication of plasmids through activation of initiation proteins. The sequence is that of Chaperone protein DnaJ from Staphylococcus saprophyticus subsp. saprophyticus (strain ATCC 15305 / DSM 20229 / NCIMB 8711 / NCTC 7292 / S-41).